Here is a 121-residue protein sequence, read N- to C-terminus: Large ribosomal subunit protein bL19 (121 aa).

The protein belongs to the bacterial ribosomal protein bL19 family.

This protein is located at the 30S-50S ribosomal subunit interface and may play a role in the structure and function of the aminoacyl-tRNA binding site. The chain is Large ribosomal subunit protein bL19 from Chlamydia trachomatis serovar L2 (strain ATCC VR-902B / DSM 19102 / 434/Bu).